The sequence spans 63 residues: Large ribosomal subunit protein uL29 (63 aa).

Belongs to the universal ribosomal protein uL29 family.

The protein is Large ribosomal subunit protein uL29 of Flavobacterium psychrophilum (strain ATCC 49511 / DSM 21280 / CIP 103535 / JIP02/86).